Consider the following 669-residue polypeptide: Putative heme-binding protein rrnAC3100 (669 aa).

A heme-binding site is contributed by histidine 181. 2 disordered regions span residues arginine 260–serine 351 and leucine 451–glutamine 477. One can recognise an ABM domain in the interval glycine 579–phenylalanine 667.

It in the N-terminal section; belongs to the ChdC family.

In Haloarcula marismortui (strain ATCC 43049 / DSM 3752 / JCM 8966 / VKM B-1809) (Halobacterium marismortui), this protein is Putative heme-binding protein rrnAC3100.